Here is a 423-residue protein sequence, read N- to C-terminus: SH2 domain-containing protein 5 (423 aa).

The PID domain occupies 28-146 (AQYVGSFPVD…LLCRSFQLAY (119 aa)). Positions 296–392 (WAFAGISRPC…LDMGRLNPTY (97 aa)) constitute an SH2 domain. The segment at 392 to 423 (YEEQDCGPPGRPPRTLRPLSHAKSEAELQGLG) is disordered.

As to quaternary structure, interacts with BCR.

The protein resides in the postsynaptic density. Functionally, may be involved in synaptic plasticity regulation through the control of Rac-GTP levels. In Homo sapiens (Human), this protein is SH2 domain-containing protein 5.